The following is a 371-amino-acid chain: Rab9 effector protein with kelch motifs (371 aa).

6 Kelch repeats span residues 47–93 (RVLL…FLSA), 98–144 (RLWV…TSSA), 149–201 (CLYV…AVGT), 202–251 (KLFI…VFKD), 252–301 (HLYI…VIPW), and 348–371 (LLLI…SLIE).

In terms of biological role, rab9 effector required for endosome to trans-Golgi network (TGN) transport. This chain is Rab9 effector protein with kelch motifs (RABEPK), found in Gallus gallus (Chicken).